A 208-amino-acid polypeptide reads, in one-letter code: Small ribosomal subunit protein uS4 (208 aa).

The region spanning 98–158 is the S4 RNA-binding domain; it reads CRLDTVSYRM…EKAKNHLRIK (61 aa).

The protein belongs to the universal ribosomal protein uS4 family. In terms of assembly, part of the 30S ribosomal subunit. Contacts protein S5. The interaction surface between S4 and S5 is involved in control of translational fidelity.

One of the primary rRNA binding proteins, it binds directly to 16S rRNA where it nucleates assembly of the body of the 30S subunit. In terms of biological role, with S5 and S12 plays an important role in translational accuracy. This Nitrosospira multiformis (strain ATCC 25196 / NCIMB 11849 / C 71) protein is Small ribosomal subunit protein uS4.